The primary structure comprises 519 residues: MWHWSLLCVFLLVPLANSTAPISFEANPDTKRLYDDLLSNYNRLIRPVVNNTETLTVWLGLKLSQLIEVNLKNQVMTTNLWVKQRWFDYKLRWDPEEYGGVEQLYVPSEHIWVPDIVLYNNWDGNYEVTLMTKATLKYTGEVFWEPPAIYKSSCEMNVEYFPYDEQICFMKFGSWTYNGAQVDLKHLDQIPGSNLVQVGIDLTEFYLSVEWDILEVPATKNEEYYPDTLEPFSDITFKLTMRRKTLFYTVNLIVPCVALTFLTVLVFYLPSDSGEKVTLCISILVSLTVFFLLLAEIIPPTSLAVPLLGKYLLFTMILVSLSVWTTVCVLNIHFRSPSTHNMSPLVRKLFLHFMPKLMMMRRTQYTLPDYDDSTPSNGYTNEIDVRDSISDFPSEFKDSQDGAYDNGMQNSVDSDNVIPRNLTPEVLQALRAVRFIAQHIKDADKDNEIVEDWKFVSMVLDRFFLWLFTLSCVFGTLAIICQSPSLYDTRSPIDRQLSEIPLRKNNFMLPPDIVRQVLT.

Positions 1-18 (MWHWSLLCVFLLVPLANS) are cleaved as a signal peptide. Residues 19–244 (TAPISFEANP…ITFKLTMRRK (226 aa)) lie on the Extracellular side of the membrane. A glycan (N-linked (GlcNAc...) asparagine) is linked at Asn-50. Cys-154 and Cys-168 are joined by a disulfide. 3 consecutive transmembrane segments (helical) span residues 245–269 (TLFYTVNLIVPCVALTFLTVLVFYL), 277–295 (VTLCISILVSLTVFFLLLA), and 311–332 (YLLFTMILVSLSVWTTVCVLNI). At 333–462 (HFRSPSTHNM…WKFVSMVLDR (130 aa)) the chain is on the cytoplasmic side. A helical membrane pass occupies residues 463–481 (FFLWLFTLSCVFGTLAIIC).

It belongs to the ligand-gated ion channel (TC 1.A.9) family. Acetylcholine receptor (TC 1.A.9.1) subfamily. As to expression, CNS in embryos.

It localises to the postsynaptic cell membrane. The protein resides in the cell membrane. In terms of biological role, after binding acetylcholine, the AChR responds by an extensive change in conformation that affects all subunits and leads to opening of an ion-conducting channel across the plasma membrane. This Drosophila melanogaster (Fruit fly) protein is Acetylcholine receptor subunit beta-like 2 (nAChRbeta2).